Reading from the N-terminus, the 30-residue chain is ASAAGAVRAGDDETLLNPVLNSLDNLVSGL.

L30 is subject to Leucine amide.

In terms of tissue distribution, expressed by the skin dorsal glands.

It is found in the secreted. In terms of biological role, lacks antimicrobial activity. Does not inhibit the formation of NO by neuronal nitric oxide. This chain is Rothein 3.3, found in Litoria rothii (Roth's tree frog).